Here is a 50-residue protein sequence, read N- to C-terminus: Small ribosomal subunit protein uS14 (50 aa).

Residues cysteine 15, cysteine 18, cysteine 33, and cysteine 36 each contribute to the Zn(2+) site.

This sequence belongs to the universal ribosomal protein uS14 family. Zinc-binding uS14 subfamily. As to quaternary structure, part of the 30S ribosomal subunit. It depends on Zn(2+) as a cofactor.

Functionally, binds 16S rRNA, required for the assembly of 30S particles. The protein is Small ribosomal subunit protein uS14 of Methanothermobacter thermautotrophicus (strain ATCC 29096 / DSM 1053 / JCM 10044 / NBRC 100330 / Delta H) (Methanobacterium thermoautotrophicum).